Reading from the N-terminus, the 445-residue chain is 3-phosphoshikimate 1-carboxyvinyltransferase (445 aa).

Lysine 34, serine 35, and arginine 39 together coordinate 3-phosphoshikimate. Position 34 (lysine 34) interacts with phosphoenolpyruvate. Residues glycine 112 and arginine 140 each coordinate phosphoenolpyruvate. Residues serine 186, serine 187, glutamine 188, serine 216, glutamate 331, and histidine 358 each coordinate 3-phosphoshikimate. Position 188 (glutamine 188) interacts with phosphoenolpyruvate. Glutamate 331 (proton acceptor) is an active-site residue. Phosphoenolpyruvate contacts are provided by arginine 362, arginine 403, and lysine 428.

It belongs to the EPSP synthase family. In terms of assembly, monomer.

It is found in the cytoplasm. It catalyses the reaction 3-phosphoshikimate + phosphoenolpyruvate = 5-O-(1-carboxyvinyl)-3-phosphoshikimate + phosphate. Its pathway is metabolic intermediate biosynthesis; chorismate biosynthesis; chorismate from D-erythrose 4-phosphate and phosphoenolpyruvate: step 6/7. Catalyzes the transfer of the enolpyruvyl moiety of phosphoenolpyruvate (PEP) to the 5-hydroxyl of shikimate-3-phosphate (S3P) to produce enolpyruvyl shikimate-3-phosphate and inorganic phosphate. The protein is 3-phosphoshikimate 1-carboxyvinyltransferase of Kocuria rhizophila (strain ATCC 9341 / DSM 348 / NBRC 103217 / DC2201).